The following is an 835-amino-acid chain: MLNFLKKIFNSSKKALRKARTIANKVQNLEAQMALLDDKDFATKTAELKKLFQEGKTLNQLLPEAYALAKEATKRVTGLTPYYVQILGAVILHQGNISEMKTGEGKTLTAIMPAYLNALSGNPVHIVTVNEYLAKREFEGSIGDVFRFLGMTVGLNTKDKDHAQKQQAYLCDILYTTNSELGFDYLRDNMEIEASNLVMKRPYSYAIVDEVDSILIDEARTPLIISQSVKETKNLYKEAQRFVRTLKNRHYLIELETKTIELTEEGITKAENFFQIDNLYNVEHASLLHHVKNALKAAFTMHKDKDYLVDYKDGQVLIIDQFTGRALPGRQFSDGLHQALEAKEGVLIKEETSIGATITYQNFFRLYHKLSGMTGTAKTEEDEFRDIYNMEVIEIPTNVPMIRIDEPDFIFVSLKEKYDALIEEITSRHKKRQPILIGTTTVEVSEIISKKLKKHSIKHEILNAKNHSKEADIIAKAGLKNAVTIATNMAGRGTDIRLGEGVKELGGLAVLGTERHESRRIDNQLRGRAGRQGDPGYSRFFISSEDELAQRFGGTRIEKIISLLQKISDSETKTSSKMVTKFFTKIQKKVESSNFDYRKYLLKYDDILRIQREIIYNQRKEILVSNRVEQIVQDLMQKTLNKAILPHFTNNPTQCQTQTLITFLENKFFPKQTFDLEEVQELCNNPKTNSLDSFQQHLLQKVKXTLQSQKDFFEKDPDKAQYFAKGLKWITLKIIDNYYQRHINDMSSLRQGIGFVSYGQQDSFIEYQKEGQVLFNNMIAKIANDITATILKFSFADSFXTPPKQKVFLNNDSSDDESSKKRRTRKVRTSKKPWN.

ATP-binding positions include Q85, 103–107 (GEGKT), and D495. Residues 806-835 (KVFLNNDSSDDESSKKRRTRKVRTSKKPWN) are disordered. Over residues 820-835 (KKRRTRKVRTSKKPWN) the composition is skewed to basic residues.

This sequence belongs to the SecA family. As to quaternary structure, monomer and homodimer. Part of the essential Sec protein translocation apparatus which comprises SecA, SecYEG and auxiliary proteins SecDF. Other proteins may also be involved.

It localises to the cell membrane. It is found in the cytoplasm. It catalyses the reaction ATP + H2O + cellular proteinSide 1 = ADP + phosphate + cellular proteinSide 2.. Functionally, part of the Sec protein translocase complex. Interacts with the SecYEG preprotein conducting channel. Has a central role in coupling the hydrolysis of ATP to the transfer of proteins into and across the cell membrane, serving as an ATP-driven molecular motor driving the stepwise translocation of polypeptide chains across the membrane. The chain is Protein translocase subunit SecA from Onion yellows phytoplasma (strain OY-M).